Reading from the N-terminus, the 210-residue chain is MDDLSPEEIQLRAHQVTDESLESTRRILGLAIESQDAGIKTITMLDEQGEQLNRIEEGMDQINKDMREAEKTLTELNKCCGLCVCPCNRTKNFESGKNYKATWGDGGDSSPSNVVSKQPSRITNGQPQQTTGAASGGYIKRITNDAREDEMEENLTQVGSILGNLKNMALDMGNEIDAQNQQIQKITEKADTNKNRIDIANTRAKKLIDS.

Met-1 carries the N-acetylmethionine modification. 4 positions are modified to phosphoserine: Ser-5, Ser-20, Ser-23, and Ser-34. Residues 14-76 form the t-SNARE coiled-coil homology 1 domain; sequence HQVTDESLES…REAEKTLTEL (63 aa). Positions 23-76 form a coiled coil; it reads STRRILGLAIESQDAGIKTITMLDEQGEQLNRIEEGMDQINKDMREAEKTLTEL. S-palmitoyl cysteine attachment occurs at residues Cys-79, Cys-80, Cys-83, Cys-85, and Cys-87. The interval 104-136 is disordered; it reads GDGGDSSPSNVVSKQPSRITNGQPQQTTGAASG. The span at 109 to 133 shows a compositional bias: polar residues; sequence SSPSNVVSKQPSRITNGQPQQTTGA. Residues Ser-110 and Ser-160 each carry the phosphoserine modification. Residues 145 to 207 form the t-SNARE coiled-coil homology 2 domain; that stretch reads DAREDEMEEN…DIANTRAKKL (63 aa).

The protein belongs to the SNAP-25 family. In terms of assembly, homotetramer (via coiled-coil domain), also forms heterotetramers with STX4 and VAMP3. Found in a complex with VAMP8 and STX1A. Found in a complex with VAMP8 and STX4 in pancreas. Interacts simultaneously with SNAPIN and SYN4. Interacts with STX1A. Interacts with STX12. Interacts tightly to multiple syntaxins and synaptobrevins/VAMPs. Interacts with ZDHHC13 (via ANK repeats). Interacts with ZDHHC17 (via ANK repeats).

It is found in the cell membrane. The protein localises to the synapse. It localises to the synaptosome. The protein resides in the cytoplasmic vesicle membrane. Functionally, essential component of the high affinity receptor for the general membrane fusion machinery and an important regulator of transport vesicle docking and fusion. This is Synaptosomal-associated protein 23 (Snap23) from Rattus norvegicus (Rat).